Reading from the N-terminus, the 245-residue chain is Uridylate kinase (245 aa).

12–15 (KLSG) is an ATP binding site. The involved in allosteric activation by GTP stretch occupies residues 20–25 (GEKGVG). Residue glycine 54 participates in UMP binding. Residues glycine 55 and arginine 59 each coordinate ATP. Residues aspartate 74 and 135-142 (IGSPYFST) each bind UMP. Positions 163, 169, and 172 each coordinate ATP.

This sequence belongs to the UMP kinase family. In terms of assembly, homohexamer.

It localises to the cytoplasm. The enzyme catalyses UMP + ATP = UDP + ADP. The protein operates within pyrimidine metabolism; CTP biosynthesis via de novo pathway; UDP from UMP (UMPK route): step 1/1. Its activity is regulated as follows. Allosterically activated by GTP. Inhibited by UTP. In terms of biological role, catalyzes the reversible phosphorylation of UMP to UDP. The polypeptide is Uridylate kinase (Streptococcus thermophilus (strain ATCC BAA-491 / LMD-9)).